We begin with the raw amino-acid sequence, 264 residues long: COP9 signalosome complex subunit 7b (264 aa).

Position 2 is an N-acetylalanine (Ala2). Positions 2-159 constitute a PCI domain; it reads AGEQKPSSNL…QLLEVDFCIG (158 aa). Residues 194–237 are a coiled coil; sequence RANQYKENHSRTQQQVEAEVTNIKKTLKATASSSAQEMEQQLAE. Over residues 223 to 232 the composition is skewed to polar residues; the sequence is TASSSAQEME. The segment at 223–264 is disordered; the sequence is TASSSAQEMEQQLAERECPPHAEQRQPTKKMSKVKGLVSSRH. A compositionally biased stretch (basic and acidic residues) spans 235-248; it reads LAERECPPHAEQRQ.

It belongs to the CSN7/EIF3M family. CSN7 subfamily. In terms of assembly, component of the CSN complex, composed of COPS1/GPS1, COPS2, COPS3, COPS4, COPS5, COPS6, COPS7 (COPS7A or COPS7B), COPS8 and COPS9. In the complex, it probably interacts directly with COPS1, COPS2, COPS4, COPS5, COPS6 and COPS8. Interacts with EIF3S6.

Its subcellular location is the cytoplasm. It localises to the nucleus. Component of the COP9 signalosome complex (CSN), a complex involved in various cellular and developmental processes. The CSN complex is an essential regulator of the ubiquitin (Ubl) conjugation pathway by mediating the deneddylation of the cullin subunits of SCF-type E3 ligase complexes, leading to decrease the Ubl ligase activity of SCF-type complexes such as SCF, CSA or DDB2. The complex is also involved in phosphorylation of p53/TP53, JUN, I-kappa-B-alpha/NFKBIA, ITPK1 and IRF8/ICSBP, possibly via its association with CK2 and PKD kinases. CSN-dependent phosphorylation of TP53 and JUN promotes and protects degradation by the Ubl system, respectively. The polypeptide is COP9 signalosome complex subunit 7b (COPS7B) (Bos taurus (Bovine)).